The following is a 91-amino-acid chain: Elongation factor 1-beta (91 aa).

It belongs to the EF-1-beta/EF-1-delta family.

Its function is as follows. Promotes the exchange of GDP for GTP in EF-1-alpha/GDP, thus allowing the regeneration of EF-1-alpha/GTP that could then be used to form the ternary complex EF-1-alpha/GTP/AAtRNA. In Saccharolobus islandicus (strain Y.N.15.51 / Yellowstone #2) (Sulfolobus islandicus), this protein is Elongation factor 1-beta.